We begin with the raw amino-acid sequence, 630 residues long: tRNA uridine 5-carboxymethylaminomethyl modification enzyme MnmG (630 aa).

14–19 (GGGHAG) contacts FAD. 282-296 (GTRYCPSIEDKVRKF) lines the NAD(+) pocket.

This sequence belongs to the MnmG family. Homodimer. Heterotetramer of two MnmE and two MnmG subunits. FAD is required as a cofactor.

The protein localises to the cytoplasm. NAD-binding protein involved in the addition of a carboxymethylaminomethyl (cmnm) group at the wobble position (U34) of certain tRNAs, forming tRNA-cmnm(5)s(2)U34. This is tRNA uridine 5-carboxymethylaminomethyl modification enzyme MnmG from Treponema pallidum (strain Nichols).